The following is a 371-amino-acid chain: Aspartate-semialdehyde dehydrogenase (371 aa).

NADP(+)-binding positions include R11–V14, T38–S39, and Q75. Residue R104 coordinates phosphate. C137 (acyl-thioester intermediate) is an active-site residue. Q164 serves as a coordination point for substrate. S167–G168 is an NADP(+) binding site. Residue E243 coordinates substrate. K246 lines the phosphate pocket. R269 is a substrate binding site. Residue H276 is the Proton acceptor of the active site. An NADP(+)-binding site is contributed by Q352.

This sequence belongs to the aspartate-semialdehyde dehydrogenase family. In terms of assembly, homodimer.

The enzyme catalyses L-aspartate 4-semialdehyde + phosphate + NADP(+) = 4-phospho-L-aspartate + NADPH + H(+). The protein operates within amino-acid biosynthesis; L-lysine biosynthesis via DAP pathway; (S)-tetrahydrodipicolinate from L-aspartate: step 2/4. It functions in the pathway amino-acid biosynthesis; L-methionine biosynthesis via de novo pathway; L-homoserine from L-aspartate: step 2/3. Its pathway is amino-acid biosynthesis; L-threonine biosynthesis; L-threonine from L-aspartate: step 2/5. Functionally, catalyzes the NADPH-dependent formation of L-aspartate-semialdehyde (L-ASA) by the reductive dephosphorylation of L-aspartyl-4-phosphate. The chain is Aspartate-semialdehyde dehydrogenase from Buchnera aphidicola subsp. Acyrthosiphon pisum (strain APS) (Acyrthosiphon pisum symbiotic bacterium).